Consider the following 359-residue polypeptide: Peroxisome assembly protein 12 (359 aa).

The Peroxisomal matrix segment spans residues 1-19 (MAEHGAHITTASVADDQPS). A helical transmembrane segment spans residues 20–47 (IFEVVAQDSLMTAVRPALQHVVKVLAES). Residues 48–51 (NPAH) lie on the Cytoplasmic side of the membrane. Residues 52–76 (YGFFWRWFDEIFTLLDFLLQQHYLS) traverse the membrane as a helical segment. The Peroxisomal matrix portion of the chain corresponds to 77-109 (RTSASFSEHFYGLKRIVAGSSPQLQRPASAGLP). A helical membrane pass occupies residues 110–139 (KEHLWKSAMFLVLLPYLKVKLEKLASTLRE). The Cytoplasmic portion of the chain corresponds to 140–144 (EDEYS). A helical membrane pass occupies residues 145 to 183 (IHPPSSHWKRFYRVFLAAYPFVTMTWEGWFLTQQLRYIL). At 184–249 (GKAEHHSPLL…VGGVALSLST (66 aa)) the chain is on the peroxisomal matrix side. Residues 250–277 (GLSVGVFFLQFLDWWYSSENQETIKSLT) form a helical membrane-spanning segment. Residues 278–359 (ALPTPPPPVH…HLIKLYSPEN (82 aa)) lie on the Cytoplasmic side of the membrane. The Zn(2+) site is built by C304, C307, C325, and C328. An RING-type; degenerate zinc finger spans residues 304 to 343 (CPLCRKARVNDTVLATSGYVFCYRCVFNYVRSHQACPITG).

The protein belongs to the pex2/pex10/pex12 family. Component of the PEX2-PEX10-PEX12 retrotranslocation channel, composed of PEX2, PEX10 and PEX12. Interacts with PEX19 via its cytoplasmic domain.

The protein resides in the peroxisome membrane. The protein operates within protein modification; protein ubiquitination. Component of a retrotranslocation channel required for peroxisome organization by mediating export of the PEX5 receptor from peroxisomes to the cytosol, thereby promoting PEX5 recycling. The retrotranslocation channel is composed of PEX2, PEX10 and PEX12; each subunit contributing transmembrane segments that coassemble into an open channel that specifically allows the passage of PEX5 through the peroxisomal membrane. PEX12 also regulates PEX5 recycling by activating the E3 ubiquitin-protein ligase activity of PEX10. When PEX5 recycling is compromised, PEX12 stimulates PEX10-mediated polyubiquitination of PEX5, leading to its subsequent degradation. In Rattus norvegicus (Rat), this protein is Peroxisome assembly protein 12 (Pex12).